A 422-amino-acid polypeptide reads, in one-letter code: Phosphoribosylamine--glycine ligase (422 aa).

Residues 107 to 312 (KDVMAAAGVR…LGQLLHAAAT (206 aa)) enclose the ATP-grasp domain. ATP is bound at residue 137–193 (GPPAGDPAWVVKDDRLAAGKGVVVTADRDVARAHGAALLEAGHPVLLESYLDGPEVS). E282 and N284 together coordinate Mg(2+).

It belongs to the GARS family. Mg(2+) serves as cofactor. Mn(2+) is required as a cofactor.

The catalysed reaction is 5-phospho-beta-D-ribosylamine + glycine + ATP = N(1)-(5-phospho-beta-D-ribosyl)glycinamide + ADP + phosphate + H(+). It participates in purine metabolism; IMP biosynthesis via de novo pathway; N(1)-(5-phospho-D-ribosyl)glycinamide from 5-phospho-alpha-D-ribose 1-diphosphate: step 2/2. In Mycobacterium bovis (strain ATCC BAA-935 / AF2122/97), this protein is Phosphoribosylamine--glycine ligase.